A 160-amino-acid polypeptide reads, in one-letter code: Nucleotide-binding protein CBU_0114 (160 aa).

The protein belongs to the YajQ family.

Nucleotide-binding protein. This is Nucleotide-binding protein CBU_0114 from Coxiella burnetii (strain RSA 493 / Nine Mile phase I).